A 288-amino-acid polypeptide reads, in one-letter code: Serpentine receptor class gamma-1 (288 aa).

The next 7 helical transmembrane spans lie at Leu25–Ile45, Phe59–Phe79, Phe118–Leu138, Leu148–Ile168, Phe197–Ile217, Val238–Leu258, and Ile268–Met288.

This sequence belongs to the nematode receptor-like protein srg family.

Its subcellular location is the membrane. The polypeptide is Serpentine receptor class gamma-1 (srg-1) (Caenorhabditis elegans).